Consider the following 467-residue polypeptide: uncharacterized protein (467 aa).

Positions 416-467 (KQQRAQTAVVGTTKELVSKATHMKPPRTPPGEAEHRKRSQSLAICQWNKNSR) are disordered. Polar residues predominate over residues 455–467 (QSLAICQWNKNSR).

This is an uncharacterized protein from Homo sapiens (Human).